Reading from the N-terminus, the 393-residue chain is Chalcone synthase 3 (393 aa).

Cys-166 is an active-site residue.

It belongs to the thiolase-like superfamily. Chalcone/stilbene synthases family.

It catalyses the reaction (E)-4-coumaroyl-CoA + 3 malonyl-CoA + 3 H(+) = 2',4,4',6'-tetrahydroxychalcone + 3 CO2 + 4 CoA. It functions in the pathway secondary metabolite biosynthesis; flavonoid biosynthesis. Its function is as follows. The primary product of this enzyme is 4,2',4',6'-tetrahydroxychalcone (also termed naringenin-chalcone or chalcone) which can under specific conditions spontaneously isomerize into naringenin. The polypeptide is Chalcone synthase 3 (CHS3) (Ruta graveolens (Common rue)).